We begin with the raw amino-acid sequence, 169 residues long: Benzoate 1,2-dioxygenase subunit beta (169 aa).

This sequence belongs to the bacterial ring-hydroxylating dioxygenase beta subunit family. This dioxygenase system consists of three proteins: the two subunits of the hydroxylase (BenA and BenB), and an electron transfer component (BenC).

It catalyses the reaction benzoate + NADH + O2 + H(+) = (1R,6S)-1,6-dihydroxycyclohexa-2,4-diene-1-carboxylate + NAD(+). Its pathway is aromatic compound metabolism; benzoate degradation via hydroxylation; catechol from benzoate: step 1/2. Its function is as follows. Degradation of benzoate to 2-hydro-1,2-dihydroxybenzoate (DHB). The beta subunit may be responsible for the substrate specificity of the enzyme. This chain is Benzoate 1,2-dioxygenase subunit beta (benB), found in Acinetobacter baylyi (strain ATCC 33305 / BD413 / ADP1).